Reading from the N-terminus, the 76-residue chain is Cytochrome c oxidase-assembly factor COX23, mitochondrial (76 aa).

A CHCH domain is found at 30–72; it reads YDPCQDFADRSIKCMRRNGNDKTMCSDYFQAYRDCKKEWTTQR. Short sequence motifs (cx9C motif) lie at residues 33-43 and 54-64; these read CQDFADRSIKC and CSDYFQAYRDC. Disulfide bonds link cysteine 33/cysteine 64 and cysteine 43/cysteine 54.

It is found in the mitochondrion intermembrane space. Functionally, required for the assembly of cytochrome c oxidase. This is Cytochrome c oxidase-assembly factor COX23, mitochondrial (COX23) from Paracoccidioides brasiliensis.